A 667-amino-acid polypeptide reads, in one-letter code: Receptor for retinol uptake STRA6 (667 aa).

A compositionally biased stretch (polar residues) spans 1 to 13 (MSSQPAGNQTSPG). The disordered stretch occupies residues 1 to 22 (MSSQPAGNQTSPGPTEDYSYGS). Topologically, residues 1–50 (MSSQPAGNQTSPGPTEDYSYGSWYIDEPQGGEELQPEGEVPSCHTSIPPS) are extracellular. Asparagine 8 carries N-linked (GlcNAc...) asparagine glycosylation. The helical transmembrane segment at 51 to 71 (LYHACLASLSILVLLLLAMLV) threads the bilayer. Residues 72–98 (RRRQLWPDCVRGRPGLPSPVDFLAGDR) are Cytoplasmic-facing. A helical transmembrane segment spans residues 99–119 (PQAVPAAVFVVLFSSLCLLLP). Over 120 to 144 (DEDPLPFLTLASAPSQDGKTEAPRG) the chain is Extracellular. A helical membrane pass occupies residues 145-165 (AWKILGLFYYAALCYPLAACA). At 166–168 (TAG) the chain is on the cytoplasmic side. A helical transmembrane segment spans residues 169–189 (HTAAHLLGSTLSWAHLGVQVW). Topologically, residues 190–205 (QRAECPQVPKIYKYYS) are extracellular. A helical membrane pass occupies residues 206 to 226 (LLASLPLLLGLGFLSLWYPVQ). Residues 227-295 (LVRSFSCRTG…PQPGFRLPLK (69 aa)) are Cytoplasmic-facing. The interval 235-293 (TGAGSKGLQSSYSEEYLRNLLCRKKLGSSSHTSKHGFLSWAWVCLRHCIYTPQPGFRLP) is interaction with RBP1. A helical membrane pass occupies residues 296-316 (LVLSATLTGTAIYQVALLLLV). The Extracellular portion of the chain corresponds to 317-367 (GMVPNIQKVRAGVTTDVSYLLAGFGIVLSEDKQEVVELVKHHLWALEVCYI). Residues 368–388 (SALVLSCSLTFLVLMRSLVTH) form a helical membrane-spanning segment. The Cytoplasmic portion of the chain corresponds to 389-422 (RTNLRALHRGAALDSSPLHRSPHPSRRAIFCWMS). Residues 423-443 (FSAYQTAFICLGLLVQQIIFF) traverse the membrane as a helical segment. The Extracellular segment spans residues 444-473 (LGTTALAFLVLMPVLHGRNLLLFRSLESSW). The chain crosses the membrane as a helical span at residues 474–494 (PFWLTLALAVILQSMAAHWVF). Topologically, residues 495–509 (LETHDGHPQLTNRRV) are cytoplasmic. The segment at residues 510–547 (LYAATFLLFPLNVLVGAMVATWRVLLSALYNAIHLGQM) is an intramembrane region (helical). Residues 548–667 (DLSLLPPRAA…ALLGANGAQP (120 aa)) are Cytoplasmic-facing. At tyrosine 643 the chain carries Phosphotyrosine.

Homodimer. Interacts with JAK2 and STAT5. Interacts (via extracellular domains) with RBP4. Interacts (via cytoplasmic domains) with RBP1. Phosphorylated on tyrosine residues in response to RBP4 binding. Phosphorylation requires the presence of LRAT, suggesting it may be triggered by the uptake of retinol that is then metabolized within the cell to retinoids that function as signaling molecules.

The protein resides in the cell membrane. Its function is as follows. Functions as a retinol transporter. Accepts all-trans retinol from the extracellular retinol-binding protein RBP4, facilitates retinol transport across the cell membrane, and then transfers retinol to the cytoplasmic retinol-binding protein RBP1. Retinol uptake is enhanced by LRAT, an enzyme that converts retinol to all-trans retinyl esters, the storage forms of vitamin A. Contributes to the activation of a signaling cascade that depends on retinol transport and LRAT-dependent generation of retinol metabolites that then trigger activation of JAK2 and its target STAT5, and ultimately increase the expression of SOCS3 and inhibit cellular responses to insulin. Important for the homeostasis of vitamin A and its derivatives, such as retinoic acid. STRA6-mediated transport is particularly important in the eye, and under conditions of dietary vitamin A deficiency. Does not transport retinoic acid. In Pongo abelii (Sumatran orangutan), this protein is Receptor for retinol uptake STRA6 (STRA6).